A 286-amino-acid polypeptide reads, in one-letter code: MKIIALRSSLKLAARIAEELKTEPVMPDERRFPDGELYLRYDEDLTGHNIFIIGNTHSDAEVMEMILTLSAIQDYRTKSVNIIAPYYGYARQHQRYKNGEPISSQILTEIYSSYSNSIATVDIHDEKTLSYSKVKFSDLHANDAIVRYYKNVDVDYVVSPDDGGLARVADISAKLGKKHFFIEKKRIDDRTVEMKVPNVDVNGKKLLIVDDIISTGGTIAKSSGLLREKGASKIYVSAVHGLFVNGSENKILQNADEIHVTDTVESKFSDISVYQEVCNYIRDIDA.

ATP is bound by residues 34–36 (DGE) and 91–93 (RQH). Mg(2+)-binding residues include His124 and Asp161. Lys184 is a catalytic residue. D-ribose 5-phosphate is bound by residues Arg186, Asp210, and 214 to 218 (STGGT).

The protein belongs to the ribose-phosphate pyrophosphokinase family. Class III (archaeal) subfamily. Homodimer. Requires Mg(2+) as cofactor.

It localises to the cytoplasm. The catalysed reaction is D-ribose 5-phosphate + ATP = 5-phospho-alpha-D-ribose 1-diphosphate + AMP + H(+). It participates in metabolic intermediate biosynthesis; 5-phospho-alpha-D-ribose 1-diphosphate biosynthesis; 5-phospho-alpha-D-ribose 1-diphosphate from D-ribose 5-phosphate (route I): step 1/1. Functionally, involved in the biosynthesis of the central metabolite phospho-alpha-D-ribosyl-1-pyrophosphate (PRPP) via the transfer of pyrophosphoryl group from ATP to 1-hydroxyl of ribose-5-phosphate (Rib-5-P). In Thermoplasma volcanium (strain ATCC 51530 / DSM 4299 / JCM 9571 / NBRC 15438 / GSS1), this protein is Ribose-phosphate pyrophosphokinase.